The chain runs to 145 residues: Large ribosomal subunit protein uL16 (145 aa).

Over residues 1-17 the composition is skewed to basic residues; the sequence is MLMPKRVKHRKVQRGRM. Residues 1 to 20 form a disordered region; the sequence is MLMPKRVKHRKVQRGRMKGV.

It belongs to the universal ribosomal protein uL16 family. As to quaternary structure, part of the 50S ribosomal subunit.

In terms of biological role, binds 23S rRNA and is also seen to make contacts with the A and possibly P site tRNAs. This chain is Large ribosomal subunit protein uL16, found in Acetivibrio thermocellus (strain ATCC 27405 / DSM 1237 / JCM 9322 / NBRC 103400 / NCIMB 10682 / NRRL B-4536 / VPI 7372) (Clostridium thermocellum).